The sequence spans 273 residues: Suppressor protein STM1 (273 aa).

The segment at 1-153 (MSNPFDLLGN…PKTAQLSLQD (153 aa)) is disordered. An N-acetylserine modification is found at S2. S32, S41, and S45 each carry phosphoserine; by MTOR. A Glycyl lysine isopeptide (Lys-Gly) (interchain with G-Cter in ubiquitin) cross-link involves residue K46. 2 positions are modified to phosphoserine; by MTOR: S55 and S73. S55 is modified (phosphoserine). Basic and acidic residues-rich tracts occupy residues 60 to 77 (AIRD…KDVT), 89 to 104 (RATD…DTKK), and 111 to 124 (GDDK…KEAQ). At S118 the chain carries Phosphoserine. Residues K121 and K171 each participate in a glycyl lysine isopeptide (Lys-Gly) (interchain with G-Cter in ubiquitin) cross-link. Phosphothreonine; by MTOR is present on T181. K184 participates in a covalent cross-link: Glycyl lysine isopeptide (Lys-Gly) (interchain with G-Cter in ubiquitin). T218 carries the phosphothreonine; by MTOR modification. Residues 219–273 (RKNFGDRNNNSRNNFNNRRGGRGARKGNNTANATNSANTVQKNRNIDVSNLPSLA) form a disordered region. 2 stretches are compositionally biased toward low complexity: residues 224–236 (DRNN…FNNR) and 244–257 (KGNN…SANT). A Phosphoserine modification is found at S229. A compositionally biased stretch (polar residues) spans 258 to 273 (VQKNRNIDVSNLPSLA).

This sequence belongs to the SERBP1-HABP4 family. In terms of assembly, associates with mature 80S ribosomes. Binds to the head domain of the 40S ribosomal subunit and prevents mRNA binding by inserting its alpha-helix domain towards the mRNA entry tunnel at the decoding site, where it blocks the binding of tRNA and mRNA at the A- and P-sites. Interacts with EFT1; interaction sequesters EFT1 at the A-site of the ribosome, thereby blocking the interaction sites of the mRNA-tRNA complex, promoting ribosome stabilization and hibernation. Interacts with CDC13. Associates with the telomere-proximal Y' element. Phosphorylation by TORC1 upon nutrient replenishment inhibits STM1 and causes its release from dormant ribosomes.

The protein resides in the cytoplasm. Its subcellular location is the nucleus. It localises to the perinuclear region. In terms of biological role, ribosome preservation factor that protect a small pool of nontranslating, vacant ribosomes in cells under nutrient starvation conditions. Under nutrient-limiting conditions, cells reduce ribosome biogenesis and degrade ribosomes via autophagy (ribophagy) or proteasomal degradation. To avoid excessive degradation during starvation, STM1 binds to and protects 80S ribosomes from proteasomal degradation. Under nutrient-sufficient conditions, TORC1 phosphorylates and inhibits STM1 to prevent formation of dormant 80S ribosomes. Acts as an inhibitor of mRNA translation by promoting ribosome hibernation: clamps the two ribosomal subunits, thereby preventing their dissociation, and inhibits translation by excluding mRNA-binding. Acts via its association with eEF2 (EFT1), promoting ribosome stabilization and storage in an inactive state. May also repress translation by preventing association of eEF3 (YEF3 and HEF3) with ribosomes. Binds specifically G4 quadruplex (these are four-stranded right-handed helices, stabilized by guanine base quartets) and purine motif triplex (characterized by a third, antiparallel purine-rich DNA strand located within the major groove of a homopurine stretch of duplex DNA) nucleic acid structures. These structures may be present at telomeres or in rRNAs. Acts with CDC13 to control telomere length homeostasis. Involved in the control of the apoptosis-like cell death. In Saccharomyces cerevisiae (strain ATCC 204508 / S288c) (Baker's yeast), this protein is Suppressor protein STM1.